A 76-amino-acid chain; its full sequence is Repressor protein of division inhibition gene dicB (76 aa).

The DNA-binding element occupies 13-33; that stretch reads KTKLAQAAGIRLASLYSWKGD.

This protein is a repressor of division inhibition gene dicB. The chain is Repressor protein of division inhibition gene dicB (dicC) from Escherichia coli (strain K12).